We begin with the raw amino-acid sequence, 352 residues long: DNA polymerase IV (352 aa).

The UmuC domain maps to 6–187 (IIHIDADCFY…VPVKFISGIG (182 aa)). D10 and D105 together coordinate Mg(2+). Residue E106 is part of the active site.

Belongs to the DNA polymerase type-Y family. Monomer. The cofactor is Mg(2+).

The protein localises to the cytoplasm. The catalysed reaction is DNA(n) + a 2'-deoxyribonucleoside 5'-triphosphate = DNA(n+1) + diphosphate. Poorly processive, error-prone DNA polymerase involved in untargeted mutagenesis. Copies undamaged DNA at stalled replication forks, which arise in vivo from mismatched or misaligned primer ends. These misaligned primers can be extended by PolIV. Exhibits no 3'-5' exonuclease (proofreading) activity. May be involved in translesional synthesis, in conjunction with the beta clamp from PolIII. The protein is DNA polymerase IV of Marinomonas sp. (strain MWYL1).